The chain runs to 434 residues: Histidinol dehydrogenase (434 aa).

Substrate is bound by residues serine 242, glutamine 264, and histidine 267. Residues glutamine 264 and histidine 267 each contribute to the Zn(2+) site. Active-site proton acceptor residues include glutamate 332 and histidine 333. Histidine 333, aspartate 366, glutamate 420, and histidine 425 together coordinate substrate. Residue aspartate 366 coordinates Zn(2+). Histidine 425 lines the Zn(2+) pocket.

Belongs to the histidinol dehydrogenase family. Zn(2+) serves as cofactor.

It catalyses the reaction L-histidinol + 2 NAD(+) + H2O = L-histidine + 2 NADH + 3 H(+). Its pathway is amino-acid biosynthesis; L-histidine biosynthesis; L-histidine from 5-phospho-alpha-D-ribose 1-diphosphate: step 9/9. Catalyzes the sequential NAD-dependent oxidations of L-histidinol to L-histidinaldehyde and then to L-histidine. This Oleidesulfovibrio alaskensis (strain ATCC BAA-1058 / DSM 17464 / G20) (Desulfovibrio alaskensis) protein is Histidinol dehydrogenase.